A 438-amino-acid polypeptide reads, in one-letter code: Methyl-coenzyme M reductase subunit beta (438 aa).

Y367 contacts coenzyme M. Residue G369 coordinates coenzyme B.

This sequence belongs to the methyl-coenzyme M reductase beta subunit family. In terms of assembly, MCR is a hexamer of two alpha, two beta, and two gamma chains, forming a dimer of heterotrimers. It depends on coenzyme F430 as a cofactor.

The protein localises to the cytoplasm. It carries out the reaction coenzyme B + methyl-coenzyme M = methane + coenzyme M-coenzyme B heterodisulfide. It functions in the pathway one-carbon metabolism; methyl-coenzyme M reduction; methane from methyl-coenzyme M: step 1/1. Component of the methyl-coenzyme M reductase (MCR) I that catalyzes the reductive cleavage of methyl-coenzyme M (CoM-S-CH3 or 2-(methylthio)ethanesulfonate) using coenzyme B (CoB or 7-mercaptoheptanoylthreonine phosphate) as reductant which results in the production of methane and the mixed heterodisulfide of CoB and CoM (CoM-S-S-CoB). This is the final step in methanogenesis. The protein is Methyl-coenzyme M reductase subunit beta (mcrB) of Methanothermus fervidus.